A 293-amino-acid chain; its full sequence is Protein phosphatase 1 regulatory subunit 3B (293 aa).

Residues 129 to 237 (RQRIENDHVC…NNQGKNYRII (109 aa)) enclose the CBM21 domain.

As to quaternary structure, interacts with glycogen, PPP1CC catalytic subunit of PP1 and PYGL. Associates with glycogen particles. Forms complexes with debranching enzyme, glycogen phosphorylase, glycogen synthase and phosphorylase kinase which is necessary for its regulation of PP1 activity.

Its function is as follows. Acts as a glycogen-targeting subunit for phosphatase PP1. Facilitates interaction of the PP1 with enzymes of the glycogen metabolism and regulates its activity. Suppresses the rate at which PP1 dephosphorylates (inactivates) glycogen phosphorylase and enhances the rate at which it activates glycogen synthase and therefore limits glycogen breakdown. This is Protein phosphatase 1 regulatory subunit 3B (ppp1r3b) from Danio rerio (Zebrafish).